A 320-amino-acid polypeptide reads, in one-letter code: 3-oxoacyl-[acyl-carrier-protein] reductase 1, chloroplastic (320 aa).

The transit peptide at 1-60 directs the protein to the chloroplast; sequence MATTVAATKLTSLKAVKKLGFREIRQVRQWSPLQSAMPHFGMLRCGSRQSFATSTVVKAQ. 82-106 lines the NADP(+) pocket; that stretch reads VTGASRGIGKAIALSLGKAGCKVLV. Serine 214 is a substrate binding site. The active-site Proton acceptor is the tyrosine 227.

The protein belongs to the short-chain dehydrogenases/reductases (SDR) family. As to quaternary structure, homotetramer.

Its subcellular location is the plastid. It localises to the chloroplast. It catalyses the reaction a (3R)-hydroxyacyl-[ACP] + NADP(+) = a 3-oxoacyl-[ACP] + NADPH + H(+). It functions in the pathway lipid metabolism; fatty acid biosynthesis. This is 3-oxoacyl-[acyl-carrier-protein] reductase 1, chloroplastic (gbkr1) from Brassica napus (Rape).